The primary structure comprises 76 residues: Large ribosomal subunit protein bL28 (76 aa).

It belongs to the bacterial ribosomal protein bL28 family.

In Opitutus terrae (strain DSM 11246 / JCM 15787 / PB90-1), this protein is Large ribosomal subunit protein bL28.